Consider the following 176-residue polypeptide: Adenine phosphoribosyltransferase (176 aa).

This sequence belongs to the purine/pyrimidine phosphoribosyltransferase family. Homodimer.

It is found in the cytoplasm. The enzyme catalyses AMP + diphosphate = 5-phospho-alpha-D-ribose 1-diphosphate + adenine. It participates in purine metabolism; AMP biosynthesis via salvage pathway; AMP from adenine: step 1/1. Catalyzes a salvage reaction resulting in the formation of AMP, that is energically less costly than de novo synthesis. This Borrelia garinii subsp. bavariensis (strain ATCC BAA-2496 / DSM 23469 / PBi) (Borreliella bavariensis) protein is Adenine phosphoribosyltransferase.